Here is a 726-residue protein sequence, read N- to C-terminus: Catalase-peroxidase (726 aa).

Positions 91 to 214 form a cross-link, tryptophyl-tyrosyl-methioninium (Trp-Tyr) (with M-240); sequence WHAAGTYRIG…LAAVQMGLIY (124 aa). Catalysis depends on H92, which acts as the Proton acceptor. Residues 214–240 constitute a cross-link (tryptophyl-tyrosyl-methioninium (Tyr-Met) (with W-91)); that stretch reads YVNPEGPNGNPDPVAAAIDIRETFRRM. H255 is a binding site for heme b. Residues 335 to 362 are disordered; that stretch reads AHQWKPKGNAGAGTVPDPADPSKRRSPS.

It belongs to the peroxidase family. Peroxidase/catalase subfamily. Homodimer or homotetramer. It depends on heme b as a cofactor. In terms of processing, formation of the three residue Trp-Tyr-Met cross-link is important for the catalase, but not the peroxidase activity of the enzyme.

The catalysed reaction is H2O2 + AH2 = A + 2 H2O. It carries out the reaction 2 H2O2 = O2 + 2 H2O. Bifunctional enzyme with both catalase and broad-spectrum peroxidase activity. The chain is Catalase-peroxidase from Cupriavidus metallidurans (strain ATCC 43123 / DSM 2839 / NBRC 102507 / CH34) (Ralstonia metallidurans).